Consider the following 131-residue polypeptide: uncharacterized protein (131 aa).

This is an uncharacterized protein from Staphylococcus aureus.